We begin with the raw amino-acid sequence, 1954 residues long: Protein abnormal spindle (1954 aa).

A disordered region spans residues V134 to A155. S151 and S360 each carry phosphoserine. Residue T364 is modified to Phosphothreonine. S388, S390, S395, S398, S491, S495, S497, S501, S504, and S514 each carry phosphoserine. The tract at residues K476 to A548 is disordered. Residues D498–R507 are compositionally biased toward polar residues. The span at R528–A548 shows a compositional bias: low complexity. Residues K836–R968 form the Calponin-homology (CH) domain. 3 IQ domains span residues R1004–Q1033, T1386–Q1415, and Q1467–Q1496. Positions R1614 to R1641 form a coiled coil. 2 IQ domains span residues L1656–L1687 and Q1690–R1721.

The protein localises to the cytoplasm. It localises to the nucleus. The protein resides in the cytoskeleton. It is found in the spindle. Its subcellular location is the microtubule organizing center. The protein localises to the perinuclear region. Its function is as follows. Required to maintain the structure of the centrosomal microtubule organizing center (MTOC) during mitosis. May have a preferential role in regulating neurogenesis. Required for germ cell mitosis and oocyte differentiation. The sequence is that of Protein abnormal spindle from Drosophila melanogaster (Fruit fly).